The following is a 344-amino-acid chain: Anthranilate phosphoribosyltransferase (344 aa).

Residues Gly-80, 83–84 (GD), Thr-88, 90–93 (NIST), 108–116 (KHGNRSISS), and Ser-120 contribute to the 5-phospho-alpha-D-ribose 1-diphosphate site. Gly-80 is a binding site for anthranilate. Position 92 (Ser-92) interacts with Mg(2+). Position 111 (Asn-111) interacts with anthranilate. Arg-166 serves as a coordination point for anthranilate. Asp-229 and Glu-230 together coordinate Mg(2+).

This sequence belongs to the anthranilate phosphoribosyltransferase family. Homodimer. Requires Mg(2+) as cofactor.

The enzyme catalyses N-(5-phospho-beta-D-ribosyl)anthranilate + diphosphate = 5-phospho-alpha-D-ribose 1-diphosphate + anthranilate. It functions in the pathway amino-acid biosynthesis; L-tryptophan biosynthesis; L-tryptophan from chorismate: step 2/5. Its function is as follows. Catalyzes the transfer of the phosphoribosyl group of 5-phosphorylribose-1-pyrophosphate (PRPP) to anthranilate to yield N-(5'-phosphoribosyl)-anthranilate (PRA). The protein is Anthranilate phosphoribosyltransferase of Chloroherpeton thalassium (strain ATCC 35110 / GB-78).